A 633-amino-acid polypeptide reads, in one-letter code: Mini-chromosome maintenance complex-binding protein (633 aa).

Residues 154 to 198 are disordered; sequence PSTSYTPSRHKRSYEEDEDMEQHPSKQKEQHMGSGGDSHGCGEPK. Positions 174-184 are enriched in basic and acidic residues; sequence EQHPSKQKEQH.

It belongs to the MCMBP family. Interacts with the MCM complex: associates with the MCM3-7 complex which lacks MCM2, while it does not interact with the MCM complex when MCM2 is present (MCM2-7 complex).

The protein resides in the nucleus. Associated component of the MCM complex that acts as a regulator of DNA replication. Binds to the MCM complex during late S phase and promotes the disassembly of the MCM complex from chromatin, thereby acting as a key regulator of pre-replication complex (pre-RC) unloading from replicated DNA. Can dissociate the MCM complex without addition of ATP; probably acts by destabilizing interactions of each individual subunits of the MCM complex. Required for sister chromatid cohesion. This is Mini-chromosome maintenance complex-binding protein (MCMBP) from Gallus gallus (Chicken).